Consider the following 63-residue polypeptide: MAKSKNHTAHNQTRKAHRNGIKKPKTYKYPSLKGVDAKFKRNHRYALHGTAKALAKARAEKSA.

The span at 1 to 26 (MAKSKNHTAHNQTRKAHRNGIKKPKT) shows a compositional bias: basic residues. Residues 1–35 (MAKSKNHTAHNQTRKAHRNGIKKPKTYKYPSLKGV) are disordered.

The protein belongs to the eukaryotic ribosomal protein eL29 family. As to quaternary structure, component of the large ribosomal subunit. Mature ribosomes consist of a small (40S) and a large (60S) subunit. The 40S subunit contains about 32 different proteins and 1 molecule of RNA (18S). The 60S subunit contains 45 different proteins and 3 molecules of RNA (25S, 5.8S and 5S).

The protein localises to the cytoplasm. Its function is as follows. Component of the ribosome, a large ribonucleoprotein complex responsible for the synthesis of proteins in the cell. The small ribosomal subunit (SSU) binds messenger RNAs (mRNAs) and translates the encoded message by selecting cognate aminoacyl-transfer RNA (tRNA) molecules. The large subunit (LSU) contains the ribosomal catalytic site termed the peptidyl transferase center (PTC), which catalyzes the formation of peptide bonds, thereby polymerizing the amino acids delivered by tRNAs into a polypeptide chain. The nascent polypeptides leave the ribosome through a tunnel in the LSU and interact with protein factors that function in enzymatic processing, targeting, and the membrane insertion of nascent chains at the exit of the ribosomal tunnel. The sequence is that of Large ribosomal subunit protein eL29 from Candida albicans (strain SC5314 / ATCC MYA-2876) (Yeast).